The chain runs to 214 residues: Urease accessory protein UreF (214 aa).

Residues 70–95 (AAAGEAGDAETDARTPSPAARAASRA) are disordered. The segment covering 83–95 (RTPSPAARAASRA) has biased composition (low complexity).

This sequence belongs to the UreF family. As to quaternary structure, ureD, UreF and UreG form a complex that acts as a GTP-hydrolysis-dependent molecular chaperone, activating the urease apoprotein by helping to assemble the nickel containing metallocenter of UreC. The UreE protein probably delivers the nickel.

It is found in the cytoplasm. Functionally, required for maturation of urease via the functional incorporation of the urease nickel metallocenter. The polypeptide is Urease accessory protein UreF (Mycolicibacterium vanbaalenii (strain DSM 7251 / JCM 13017 / BCRC 16820 / KCTC 9966 / NRRL B-24157 / PYR-1) (Mycobacterium vanbaalenii)).